We begin with the raw amino-acid sequence, 595 residues long: DNA polymerase (595 aa).

The 3'-5' exonuclease domain occupies 1–212; sequence MIELRHEVQG…CKSLTPLVPD (212 aa). A polymerase region spans residues 213–595; that stretch reads VSRSLVPYEH…SWGSLYGADY (383 aa).

The protein belongs to the DNA polymerase type-A family.

It carries out the reaction DNA(n) + a 2'-deoxyribonucleoside 5'-triphosphate = DNA(n+1) + diphosphate. Functionally, replicates viral genomic DNA. This polymerase possesses two enzymatic activities: DNA synthesis (polymerase) and an exonucleolytic activity that degrades single-stranded DNA in the 3'-5' direction. In Mycobacterium phage L5 (Mycobacteriophage L5), this protein is DNA polymerase (44).